The primary structure comprises 123 residues: UPF0102 protein Maqu_2464 (123 aa).

The protein belongs to the UPF0102 family.

In Marinobacter nauticus (strain ATCC 700491 / DSM 11845 / VT8) (Marinobacter aquaeolei), this protein is UPF0102 protein Maqu_2464.